The primary structure comprises 218 residues: Pyridoxine/pyridoxamine 5'-phosphate oxidase (218 aa).

Substrate contacts are provided by residues 14-17 (RREY) and Lys-72. FMN is bound by residues 67–72 (RIVLLK), 82–83 (YT), Arg-88, Lys-89, and Gln-111. Positions 129, 133, and 137 each coordinate substrate. FMN-binding positions include 146-147 (QS) and Trp-191. 197 to 199 (RLH) provides a ligand contact to substrate. Arg-201 lines the FMN pocket.

This sequence belongs to the pyridoxamine 5'-phosphate oxidase family. In terms of assembly, homodimer. It depends on FMN as a cofactor.

It catalyses the reaction pyridoxamine 5'-phosphate + O2 + H2O = pyridoxal 5'-phosphate + H2O2 + NH4(+). The enzyme catalyses pyridoxine 5'-phosphate + O2 = pyridoxal 5'-phosphate + H2O2. The protein operates within cofactor metabolism; pyridoxal 5'-phosphate salvage; pyridoxal 5'-phosphate from pyridoxamine 5'-phosphate: step 1/1. Its pathway is cofactor metabolism; pyridoxal 5'-phosphate salvage; pyridoxal 5'-phosphate from pyridoxine 5'-phosphate: step 1/1. Catalyzes the oxidation of either pyridoxine 5'-phosphate (PNP) or pyridoxamine 5'-phosphate (PMP) into pyridoxal 5'-phosphate (PLP). This is Pyridoxine/pyridoxamine 5'-phosphate oxidase from Escherichia coli (strain 55989 / EAEC).